Here is a 917-residue protein sequence, read N- to C-terminus: Protein FAN (917 aa).

Residues 176–247 (RLARTSFDKN…QDVRRIYKRR (72 aa)) form the GRAM domain. The BEACH-type PH domain maps to 189–286 (NISEKLHMEC…DRDDLYFYIA (98 aa)). One can recognise a BEACH domain in the interval 290-575 (EHHVAEHTAE…QLFVTPHPRR (286 aa)). WD repeat units follow at residues 628 to 658 (IHKE…KMFS), 670 to 700 (FSNM…YFYS), 712 to 740 (GHDD…KVWS), 761 to 791 (EHDV…NIWD), 803 to 833 (CHSG…NVID), and 884 to 914 (GHTG…IFWK).

As to expression, ubiquitous.

Couples the p55 TNF-receptor (TNF-R55 / TNFR1) to neutral sphingomyelinase (N-SMASE). Specifically binds to the N-smase activation domain of TNF-R55. May regulate ceramide production by N-SMASE. The chain is Protein FAN (NSMAF) from Homo sapiens (Human).